The following is a 555-amino-acid chain: DNA ligase (555 aa).

Glu-247 contacts ATP. The active-site N6-AMP-lysine intermediate is the Lys-249. 6 residues coordinate ATP: Arg-254, Arg-269, Glu-298, Phe-337, Arg-411, and Lys-417.

This sequence belongs to the ATP-dependent DNA ligase family. Requires Mg(2+) as cofactor.

It carries out the reaction ATP + (deoxyribonucleotide)n-3'-hydroxyl + 5'-phospho-(deoxyribonucleotide)m = (deoxyribonucleotide)n+m + AMP + diphosphate.. Its function is as follows. DNA ligase that seals nicks in double-stranded DNA during DNA replication, DNA recombination and DNA repair. The protein is DNA ligase of Archaeoglobus fulgidus (strain ATCC 49558 / DSM 4304 / JCM 9628 / NBRC 100126 / VC-16).